A 546-amino-acid chain; its full sequence is uncharacterized protein (546 aa).

The next 5 helical transmembrane spans lie at 4–23, 30–47, 57–79, 91–113, and 155–177; these read ILLENPLLVLFLVAAIGYPL, GSSLGVAAVLFVGLAMGS, IVYVLGLALFVYTIGLSSGPAFV, ALIIGMLLVAAGLVVGAQRLLGF, and PVVGYSVAYPMGVMGVVLAISLV. RCK C-terminal domains follow at residues 189–274 and 275–359; these read GKRL…FLGE and VSEE…FFGD. 6 consecutive transmembrane segments (helical) span residues 372–394, 399–421, 434–456, 460–482, 489–511, and 521–543; these read FSLGLALGLLLGIIPIPLPGGIT, FAGGPLIVALILGTIGRSGSMVW, IGLVLFLAGVGTRAGYGFVTTLA, GLAIFAAGAVVTCLTALATLWIG, PMSILIGMVAGLQTQPAVLGYAL, and IGYASVYPVATISKILIVQILLT.

This sequence belongs to the AAE transporter (TC 2.A.81) family.

It localises to the cell membrane. This is an uncharacterized protein from Geobacter sulfurreducens (strain ATCC 51573 / DSM 12127 / PCA).